The chain runs to 426 residues: Lipid droplet localized protein (426 aa).

A helical transmembrane segment spans residues 278–298 (FYGYLIGLWIMFLSIFVKYPF).

The protein belongs to the saccharopine dehydrogenase family.

The protein resides in the membrane. The protein localises to the lipid droplet. The polypeptide is Lipid droplet localized protein (Caenorhabditis elegans).